Consider the following 116-residue polypeptide: uncharacterized protein (116 aa).

Residues 5–23 (LLAVETWYMLILSFRFLFF) traverse the membrane as a helical segment.

It is found in the membrane. This is an uncharacterized protein from Saccharomyces cerevisiae (strain ATCC 204508 / S288c) (Baker's yeast).